The following is a 351-amino-acid chain: MIAEVQEKTISSSPSIISEEEALQILKGEVPLLPVVAKASEERFRHFGNRVRIHILDNIKNGYCPEDCGYCAQRKGGESGIQEYSLKSPEEIWEDAKKAKENGAYRFCMVTSGRGPTDKAVDKLAETISKINGELGMKVCLSAGILDGKKAKTLKDAGLDRYNHNLNTSESKYNEICSTHTFKDRLTTLEAAKEAEIGLCSGIIVGMGEELKDIVQVAFELKRLGVISIPVNFFIPIKGHAIQKSTLTPEFCVRVLSVFRLVNPDSEIRVGAGREGHLGFLQSMALYVANSLFAEGYLNVKGSEMEQTMNLIRDCNMVPEFTEGIPEGWEDYDSKFLYDEKNFPELYKHKK.

The Radical SAM core domain occupies 49 to 265; it reads NRVRIHILDN…LSVFRLVNPD (217 aa). Residues Cys64, Cys68, and Cys71 each contribute to the [4Fe-4S] cluster site. [2Fe-2S] cluster contacts are provided by Cys108, Cys140, Cys200, and Arg269.

The protein belongs to the radical SAM superfamily. Biotin synthase family. As to quaternary structure, homodimer. Requires [4Fe-4S] cluster as cofactor. [2Fe-2S] cluster is required as a cofactor.

It carries out the reaction (4R,5S)-dethiobiotin + (sulfur carrier)-SH + 2 reduced [2Fe-2S]-[ferredoxin] + 2 S-adenosyl-L-methionine = (sulfur carrier)-H + biotin + 2 5'-deoxyadenosine + 2 L-methionine + 2 oxidized [2Fe-2S]-[ferredoxin]. Its pathway is cofactor biosynthesis; biotin biosynthesis; biotin from 7,8-diaminononanoate: step 2/2. Functionally, catalyzes the conversion of dethiobiotin (DTB) to biotin by the insertion of a sulfur atom into dethiobiotin via a radical-based mechanism. This is Biotin synthase from Leptospira biflexa serovar Patoc (strain Patoc 1 / Ames).